The sequence spans 432 residues: Delta-aminolevulinic acid dehydratase, chloroplastic (432 aa).

The disordered stretch occupies residues Ala-84–Asn-113. The active-site Schiff-base intermediate with substrate is the Lys-300. Residues Arg-310 and Lys-322 each coordinate 5-aminolevulinate. Residue Glu-338 participates in Mg(2+) binding. The Schiff-base intermediate with substrate role is filled by Lys-353. 5-aminolevulinate is bound by residues Ser-379 and Tyr-418.

This sequence belongs to the ALAD family. In terms of assembly, homooctamer. It depends on Mg(2+) as a cofactor.

It localises to the plastid. The protein localises to the chloroplast. The catalysed reaction is 2 5-aminolevulinate = porphobilinogen + 2 H2O + H(+). It participates in porphyrin-containing compound metabolism; protoporphyrin-IX biosynthesis; coproporphyrinogen-III from 5-aminolevulinate: step 1/4. Catalyzes an early step in the biosynthesis of tetrapyrroles. Binds two molecules of 5-aminolevulinate per subunit, each at a distinct site, and catalyzes their condensation to form porphobilinogen. In Physcomitrium patens (Spreading-leaved earth moss), this protein is Delta-aminolevulinic acid dehydratase, chloroplastic (HEMB).